Here is a 203-residue protein sequence, read N- to C-terminus: Urease accessory protein UreG (203 aa).

Residue 14–21 (GPVGSGKT) participates in GTP binding.

It belongs to the SIMIBI class G3E GTPase family. UreG subfamily. As to quaternary structure, homodimer. UreD, UreF and UreG form a complex that acts as a GTP-hydrolysis-dependent molecular chaperone, activating the urease apoprotein by helping to assemble the nickel containing metallocenter of UreC. The UreE protein probably delivers the nickel.

It is found in the cytoplasm. Functionally, facilitates the functional incorporation of the urease nickel metallocenter. This process requires GTP hydrolysis, probably effectuated by UreG. The sequence is that of Urease accessory protein UreG from Rhizobium meliloti (strain 1021) (Ensifer meliloti).